A 321-amino-acid chain; its full sequence is Calcium-regulated beta-propeller protein CarP (321 aa).

An N-terminal signal peptide occupies residues 1–42 (MTIHAQTPEPFSMSRAFTPRRLLLAVLLVALSALVLLGQSFR).

The protein belongs to the YjiK family.

The protein localises to the cell inner membrane. In terms of biological role, plays a role in intracellular Ca(2+) homeostasis. Involved in modulating Ca(2+)-induced swarming motility and pyocyanine production. Plays a role in regulating virulence in a Ca(2+)-dependent manner. Involved in cell protection against oxidative stress in the presence of elevated Ca(2+). The protein is Calcium-regulated beta-propeller protein CarP of Pseudomonas aeruginosa (strain ATCC 15692 / DSM 22644 / CIP 104116 / JCM 14847 / LMG 12228 / 1C / PRS 101 / PAO1).